A 523-amino-acid polypeptide reads, in one-letter code: Transcription factor MYB120 (523 aa).

2 consecutive HTH myb-type domains span residues 23 to 75 (GVIL…ANHL) and 76 to 130 (RPNL…KRLL). 2 DNA-binding regions (H-T-H motif) span residues 51-75 (WNAV…ANHL) and 103-126 (WARM…NTRL). Disordered stretches follow at residues 140–254 (DIIP…YPTL), 332–373 (QTAT…SHYT), 396–426 (QIPQ…GAHR), and 444–470 (LASG…NNTN). Basic residues predominate over residues 147–167 (LHPHPHHQQQQQHNHHHHHHQ). Over residues 175 to 185 (MYFQPQSSQRN) the composition is skewed to polar residues. Composition is skewed to low complexity over residues 202-212 (SSSSFTFHTTT), 223-232 (TPNTPSQLSS), and 341-368 (NPYS…PSFL). Residues 396–410 (QIPQIDGFNNVNNFT) show a composition bias toward polar residues.

In terms of tissue distribution, expressed in pollen grains and pollen tube. Mostly expressed in mature pollen grains, and, to a lower extent, in inflorescences and siliques.

The protein resides in the nucleus. In terms of biological role, transcription activator. Binds to 5'-CAACTGTC-3' and/or 5'-TAACAAA-3' motif in target gene promoter to promote their expression. Together with MYB97 and MYB101, functions as a male factor that controls pollen tube-synergid interaction in fertilization. Required for pollen tube growth arrest and sperm cell release in the female gametophyte, probably via the regulation of pollen tube-specific gene expression. This chain is Transcription factor MYB120, found in Arabidopsis thaliana (Mouse-ear cress).